The chain runs to 1828 residues: Dedicator of cytokinesis protein 2 (1828 aa).

One can recognise an SH3 domain in the interval 8 to 69; that stretch reads DKERHGVAIY…PTSFIHLKEV (62 aa). An N6-acetyllysine modification is found at Lys-304. Residues 423–607 enclose the C2 DOCK-type domain; it reads RNDIYITLLQ…DVFSISTLVC (185 aa). 2 positions are modified to phosphoserine: Ser-588 and Ser-593. Lys-738 is subject to N6-acetyllysine. A DOCKER domain is found at 1210-1621; sequence YKDNNREEMY…VEKEYGVREM (412 aa). Residues 1652–1703 form a disordered region; the sequence is SDCSTPSKVPAESFDLESAPPKTPKVEEEPISPGSTLPEVKLRRSKKRTKRS. Residues Ser-1683, Ser-1704, Ser-1729, and Ser-1782 each carry the phosphoserine modification.

It belongs to the DOCK family. As to quaternary structure, homodimer. Interacts with RAC1 and RAC2. Interacts with CRKL and VAV. Interacts with CD3Z. Specifically expressed in hematopoietic cells.

The protein localises to the endomembrane system. It is found in the cytoplasm. Its subcellular location is the cytoskeleton. In terms of biological role, involved in cytoskeletal rearrangements required for lymphocyte migration in response of chemokines. Activates RAC1 and RAC2, but not CDC42, by functioning as a guanine nucleotide exchange factor (GEF), which exchanges bound GDP for free GTP. May also participate in IL2 transcriptional activation via the activation of RAC2. This is Dedicator of cytokinesis protein 2 (Dock2) from Mus musculus (Mouse).